A 396-amino-acid chain; its full sequence is Tryptophan synthase beta chain (396 aa).

The residue at position 88 (Lys88) is an N6-(pyridoxal phosphate)lysine.

It belongs to the TrpB family. Tetramer of two alpha and two beta chains. Pyridoxal 5'-phosphate is required as a cofactor.

It carries out the reaction (1S,2R)-1-C-(indol-3-yl)glycerol 3-phosphate + L-serine = D-glyceraldehyde 3-phosphate + L-tryptophan + H2O. Its pathway is amino-acid biosynthesis; L-tryptophan biosynthesis; L-tryptophan from chorismate: step 5/5. Functionally, the beta subunit is responsible for the synthesis of L-tryptophan from indole and L-serine. In Shewanella sp. (strain ANA-3), this protein is Tryptophan synthase beta chain.